The following is a 506-amino-acid chain: Probable malate:quinone oxidoreductase (506 aa).

It belongs to the MQO family. The cofactor is FAD.

It carries out the reaction (S)-malate + a quinone = a quinol + oxaloacetate. Its pathway is carbohydrate metabolism; tricarboxylic acid cycle; oxaloacetate from (S)-malate (quinone route): step 1/1. The protein is Probable malate:quinone oxidoreductase of Rhodococcus jostii (strain RHA1).